Here is an 830-residue protein sequence, read N- to C-terminus: Scavenger receptor class F member 1 (830 aa).

The N-terminal stretch at methionine 1 to glycine 19 is a signal peptide. At serine 20–threonine 421 the chain is on the extracellular side. 4 EGF-like domains span residues threonine 53–serine 87, tryptophan 95–glutamate 130, tryptophan 155–serine 191, and tryptophan 215–glutamate 249. Intrachain disulfides connect cysteine 57–cysteine 69, cysteine 63–cysteine 75, cysteine 77–cysteine 86, cysteine 99–cysteine 111, cysteine 105–cysteine 118, cysteine 120–cysteine 129, cysteine 159–cysteine 172, cysteine 165–cysteine 179, cysteine 181–cysteine 190, cysteine 219–cysteine 230, cysteine 225–cysteine 237, and cysteine 239–cysteine 248. Residue asparagine 289 is glycosylated (N-linked (GlcNAc...) asparagine). EGF-like domains follow at residues phenylalanine 302–glutamate 339 and cysteine 351–asparagine 382. Disulfide bonds link cysteine 306–cysteine 319, cysteine 313–cysteine 326, cysteine 329–cysteine 338, cysteine 355–cysteine 363, cysteine 358–cysteine 370, and cysteine 372–cysteine 381. Asparagine 382 and asparagine 393 each carry an N-linked (GlcNAc...) asparagine glycan. The helical transmembrane segment at alanine 422–alanine 442 threads the bilayer. The Cytoplasmic segment spans residues cysteine 443–proline 830. Disordered regions lie at residues glycine 516–cysteine 539, serine 581–valine 688, and phenylalanine 715–proline 830. 2 positions are modified to phosphoserine: serine 589 and serine 606. Over residues glutamate 634–alanine 643 the composition is skewed to acidic residues. Over residues proline 644–proline 653 the composition is skewed to low complexity.

Heterophilic interaction with SREC2 via its extracellular domain. The heterophilic interaction is suppressed by the presence of ligand such as Ac-LDL. Interacts with AVIL. Endothelial cells.

It is found in the membrane. Mediates the binding and degradation of acetylated low density lipoprotein (Ac-LDL). Mediates heterophilic interactions, suggesting a function as adhesion protein. Plays a role in the regulation of neurite-like outgrowth. This Homo sapiens (Human) protein is Scavenger receptor class F member 1 (SCARF1).